The sequence spans 580 residues: Arginine--tRNA ligase (580 aa).

Positions 137 to 147 match the 'HIGH' region motif; it reads ANPTGPLHIGH.

This sequence belongs to the class-I aminoacyl-tRNA synthetase family. In terms of assembly, monomer.

The protein localises to the cytoplasm. It carries out the reaction tRNA(Arg) + L-arginine + ATP = L-arginyl-tRNA(Arg) + AMP + diphosphate. The protein is Arginine--tRNA ligase of Anaplasma phagocytophilum (strain HZ).